A 512-amino-acid chain; its full sequence is Glucose-6-phosphate 1-dehydrogenase (512 aa).

Residues Arg61, 103–104 (EF), and Lys171 each bind NADP(+). Substrate-binding residues include His201, Lys205, Glu239, and Asp258. His263 acts as the Proton acceptor in catalysis. Residues Lys360 and Lys365 each coordinate substrate. The tract at residues 479 to 512 (QDSSPSFPNYPAGSSGPKEADALIERDGRSWRPL) is disordered. The span at 496–512 (KEADALIERDGRSWRPL) shows a compositional bias: basic and acidic residues.

This sequence belongs to the glucose-6-phosphate dehydrogenase family.

The enzyme catalyses D-glucose 6-phosphate + NADP(+) = 6-phospho-D-glucono-1,5-lactone + NADPH + H(+). It functions in the pathway carbohydrate degradation; pentose phosphate pathway; D-ribulose 5-phosphate from D-glucose 6-phosphate (oxidative stage): step 1/3. Catalyzes the oxidation of glucose 6-phosphate to 6-phosphogluconolactone. The chain is Glucose-6-phosphate 1-dehydrogenase from Chlamydia pneumoniae (Chlamydophila pneumoniae).